Consider the following 559-residue polypeptide: Pentatricopeptide repeat-containing protein At1g08610 (559 aa).

PPR repeat units follow at residues 103 to 137 (DEETNNEILHNLCSNGKLTDACKLVEVMARHNQVP), 138 to 172 (HFPSCSNLVRGLARIDQLDKAMCILRVMVMSGGVP), 173 to 207 (DTITYNMIIGNLCKKGHIRTALVLLEDMSLSGSPP), 208 to 242 (DVITYNTVIRCMFDYGNAEQAIRFWKDQLQNGCPP), 243 to 277 (FMITYTVLVELVCRYCGSARAIEVLEDMAVEGCYP), 278 to 312 (DIVTYNSLVNYNCRRGNLEEVASVIQHILSHGLEL), 313 to 347 (NTVTYNTLLHSLCSHEYWDEVEEILNIMYQTSYCP), 348 to 382 (TVITYNILINGLCKARLLSRAIDFFYQMLEQKCLP), 383 to 417 (DIVTYNTVLGAMSKEGMVDDAIELLGLLKNTCCPP), 418 to 452 (GLITYNSVIDGLAKKGLMKKALELYHQMLDAGIFP), 453 to 487 (DDITRRSLIYGFCRANLVEEAGQVLKETSNRGNGI), 488 to 522 (RGSTYRLVIQGLCKKKEIEMAIEVVEIMLTGGCKP), and 523 to 557 (DETIYTAIVKGVEEMGMGSEAVQLQKKLKQWKLLK).

Belongs to the PPR family. P subfamily.

In Arabidopsis thaliana (Mouse-ear cress), this protein is Pentatricopeptide repeat-containing protein At1g08610.